The chain runs to 66 residues: Small ribosomal subunit protein eS27 (66 aa).

Zn(2+) is bound by residues cysteine 21, cysteine 24, cysteine 40, and cysteine 43. Residues cysteine 21–cysteine 43 form a C4-type zinc finger.

It belongs to the eukaryotic ribosomal protein eS27 family. In terms of assembly, part of the 30S ribosomal subunit. Zn(2+) serves as cofactor.

The chain is Small ribosomal subunit protein eS27 from Sulfolobus acidocaldarius (strain ATCC 33909 / DSM 639 / JCM 8929 / NBRC 15157 / NCIMB 11770).